A 769-amino-acid chain; its full sequence is Discoidin, CUB and LCCL domain-containing protein 2 (769 aa).

Residues 1 to 29 show a composition bias toward low complexity; the sequence is MASRAPLRAARSPQDPGGRAAPAATGRAP. A disordered region spans residues 1–39; it reads MASRAPLRAARSPQDPGGRAAPAATGRAPLPSAGWCPLP. Positions 1–63 are cleaved as a signal peptide; sequence MASRAPLRAA…LLLLLPDAGA (63 aa). Over 64–523 the chain is Extracellular; that stretch reads QKGDGCGHTV…VTPSVTKDVA (460 aa). 2 disulfide bridges follow: Cys69–Cys96 and Cys123–Cys145. Residues 69-184 form the CUB domain; sequence CGHTVLGPES…RGFLASYSVI (116 aa). N-linked (GlcNAc...) asparagine glycosylation occurs at Asn92. A glycan (N-linked (GlcNAc...) asparagine) is linked at Asn152. One can recognise an LCCL domain in the interval 184–282; it reads IDKQDLITCL…MVGYLSTSLF (99 aa). An intrachain disulfide couples Cys212 to Cys234. A glycan (N-linked (GlcNAc...) asparagine) is linked at Asn269. Cys289 and Cys446 are joined by a disulfide. The F5/8 type C domain occupies 289 to 446; that stretch reads CYGTLGMESG…IAMKVELLGC (158 aa). Residues 455-476 are disordered; it reads PKLTQPPPPRNSNNLKNTTVHP. A compositionally biased stretch (polar residues) spans 465 to 474; it reads NSNNLKNTTV. 2 N-linked (GlcNAc...) asparagine glycosylation sites follow: Asn471 and Asn511. Residues 524-544 traverse the membrane as a helical segment; the sequence is LAAVLVPVLVMALTTLILILV. Residues 545 to 769 lie on the Cytoplasmic side of the membrane; it reads CAWHWRNRKK…EKFDAFKETL (225 aa). The residue at position 601 (Ser601) is a Phosphoserine. The disordered stretch occupies residues 719 to 769; the sequence is SCSSGQAQYDTPKGGKPAAAPEELVYQVPQSTQEASGAGRDEKFDAFKETL. Residues 757–769 are compositionally biased toward basic and acidic residues; the sequence is GRDEKFDAFKETL.

Its subcellular location is the membrane. This Rattus norvegicus (Rat) protein is Discoidin, CUB and LCCL domain-containing protein 2 (Dcbld2).